Here is a 79-residue protein sequence, read N- to C-terminus: Acyl carrier protein (79 aa).

The region spanning 2–77 is the Carrier domain; that stretch reads SDIEARVKKI…NAIDYANTHH (76 aa). Ser-37 bears the O-(pantetheine 4'-phosphoryl)serine mark.

Belongs to the acyl carrier protein (ACP) family. 4'-phosphopantetheine is transferred from CoA to a specific serine of apo-ACP by AcpS. This modification is essential for activity because fatty acids are bound in thioester linkage to the sulfhydryl of the prosthetic group.

It localises to the cytoplasm. It functions in the pathway lipid metabolism; fatty acid biosynthesis. Functionally, carrier of the growing fatty acid chain in fatty acid biosynthesis. In Polaromonas naphthalenivorans (strain CJ2), this protein is Acyl carrier protein.